The sequence spans 298 residues: 3-sulfolactaldehyde reductase (298 aa).

NAD(+) contacts are provided by residues 11-12 (QM), D31, L65, and T96. Residue R123 participates in 2,3-dihydroxypropane-1-sulfonate binding. The active site involves K171. 174–178 (NNYMS) provides a ligand contact to 2,3-dihydroxypropane-1-sulfonate. K240 contributes to the NAD(+) binding site.

This sequence belongs to the HIBADH-related family. 3-sulfolactaldehyde reductase subfamily. Homotetramer. Dimer of dimers.

The catalysed reaction is (2S)-3-sulfopropanediol + NAD(+) = (2S)-3-sulfolactaldehyde + NADH + H(+). It carries out the reaction 4-hydroxybutanoate + NAD(+) = succinate semialdehyde + NADH + H(+). Inhibited by the NADH analogs tetrahydro-NADH and hexahydro-NADH. Reduces 3-sulfolactaldehyde (SLA) to 2,3-dihydroxypropane 1-sulfonate (DHPS). Metabolite profiling studies showed that the enzyme also catalyzes in vitro the NADH-dependent reduction of succinic semialdehyde (SSA) to 4-hydroxybutyrate (GHB), and that it could be involved in the metabolism of SSA, and other potentially toxic intermediates that may accumulate under stress conditions. However, the enzyme exhibits a 42,000-fold greater catalytic efficiency for the reduction of SLA over SSA. Shows no detectable activity on the analogous glycolytic intermediate glyceraldehyde-3-phosphate. The protein is 3-sulfolactaldehyde reductase (yihU) of Escherichia coli (strain K12).